Reading from the N-terminus, the 73-residue chain is V-type proton ATPase subunit e (73 aa).

The Lumenal segment spans residues 1–3 (MSS). The chain crosses the membrane as a helical span at residues 4–24 (FYTVVGVFIVVSAMSVLFWIM). Topologically, residues 25–35 (APKNNQAVWRS) are cytoplasmic. The chain crosses the membrane as a helical span at residues 36–56 (TVILTLAMMFLMWAITFLCQL). Residues 57 to 73 (HPLVAPRRSDLRPEFAE) lie on the Lumenal side of the membrane.

This sequence belongs to the V-ATPase e1/e2 subunit family. V-ATPase is a heteromultimeric enzyme composed of a peripheral catalytic V1 complex (components A to H) attached to an integral membrane V0 proton pore complex (components: a, c, c', c'', d, e, f and VOA1).

It is found in the vacuole membrane. Its function is as follows. Subunit of the V0 complex of vacuolar(H+)-ATPase (V-ATPase), a multisubunit enzyme composed of a peripheral complex (V1) that hydrolyzes ATP and a membrane integral complex (V0) that translocates protons. V-ATPase is responsible for acidifying and maintaining the pH of intracellular compartments. The protein is V-type proton ATPase subunit e (VMA9) of Saccharomyces cerevisiae (strain ATCC 204508 / S288c) (Baker's yeast).